The chain runs to 242 residues: Biosynthetic peptidoglycan transglycosylase (242 aa).

A helical transmembrane segment spans residues 19–39 (ILAALAVFWGGGIALFSVVPV).

This sequence belongs to the glycosyltransferase 51 family.

It is found in the cell inner membrane. The catalysed reaction is [GlcNAc-(1-&gt;4)-Mur2Ac(oyl-L-Ala-gamma-D-Glu-L-Lys-D-Ala-D-Ala)](n)-di-trans,octa-cis-undecaprenyl diphosphate + beta-D-GlcNAc-(1-&gt;4)-Mur2Ac(oyl-L-Ala-gamma-D-Glu-L-Lys-D-Ala-D-Ala)-di-trans,octa-cis-undecaprenyl diphosphate = [GlcNAc-(1-&gt;4)-Mur2Ac(oyl-L-Ala-gamma-D-Glu-L-Lys-D-Ala-D-Ala)](n+1)-di-trans,octa-cis-undecaprenyl diphosphate + di-trans,octa-cis-undecaprenyl diphosphate + H(+). It participates in cell wall biogenesis; peptidoglycan biosynthesis. In terms of biological role, peptidoglycan polymerase that catalyzes glycan chain elongation from lipid-linked precursors. This chain is Biosynthetic peptidoglycan transglycosylase, found in Salmonella typhi.